A 207-amino-acid polypeptide reads, in one-letter code: MARYRGPVVKIMRREGVDLFLKSSYTFNKDKFHRKGPPGMPTKRKGKVSEYGTQLREKQKLKRAYGLLEKQFRNYYEEASHSHGVTGEILLQLLERRLDNVVYRLGFAVTRRQARNFIAHRHVLVNGERVDIPSYRLNVGDKVEIREKFRASTFIADNIRLSQSLQGIPSWLSADYTNFGGDVTALPERHHIDLPVKEQVIVELYSK.

Residues 96 to 159 (RRLDNVVYRL…RASTFIADNI (64 aa)) form the S4 RNA-binding domain.

Belongs to the universal ribosomal protein uS4 family. Part of the 30S ribosomal subunit. Contacts protein S5. The interaction surface between S4 and S5 is involved in control of translational fidelity.

Functionally, one of the primary rRNA binding proteins, it binds directly to 16S rRNA where it nucleates assembly of the body of the 30S subunit. Its function is as follows. With S5 and S12 plays an important role in translational accuracy. The chain is Small ribosomal subunit protein uS4 from Leptospira borgpetersenii serovar Hardjo-bovis (strain JB197).